Here is a 147-residue protein sequence, read N- to C-terminus: MYPAHLLVLLAVCVSLLGASDMPPQPLNLVQFSNMIQCANHGRRPTSNYMDYGCYCGKGGSGTPVDALDRCCKIHDDCYGEAEKSQNCAPYWTWYTWKCGSDGPQCDDSETGCKRIVCDCDVEAADCFAGAPYNNANWNIDTKKRCQ.

Positions 1–19 are cleaved as a signal peptide; it reads MYPAHLLVLLAVCVSLLGA. A propeptide spanning residues 20–27 is cleaved from the precursor; it reads SDMPPQPL. Disulfide bonds link C38–C99, C54–C146, C56–C72, C71–C127, C78–C120, C88–C113, and C106–C118. Ca(2+) is bound by residues Y55, G57, and G59. H75 is a catalytic residue. D76 is a Ca(2+) binding site. Residue D121 is part of the active site.

This sequence belongs to the phospholipase A2 family. Group I subfamily. D49 sub-subfamily. Requires Ca(2+) as cofactor. In terms of tissue distribution, expressed by the venom gland.

The protein localises to the secreted. The enzyme catalyses a 1,2-diacyl-sn-glycero-3-phosphocholine + H2O = a 1-acyl-sn-glycero-3-phosphocholine + a fatty acid + H(+). Snake venom phospholipase A2 (PLA2) that inhibits collagen-induced platelet aggregation. PLA2 catalyzes the calcium-dependent hydrolysis of the 2-acyl groups in 3-sn-phosphoglycerides. The protein is Acidic phospholipase A2 S3-24 of Austrelaps superbus (Lowland copperhead snake).